Consider the following 890-residue polypeptide: Tyrosine-protein kinase receptor TYRO3 (890 aa).

An N-terminal signal peptide occupies residues 1-40 (MALRRSMGRPGLPPLPLPPPPRLGLLLAALASLLLPESAA). Ig-like C2-type domains lie at 41 to 128 (AGLK…TEIS) and 139 to 220 (PFFT…ATVH). The Extracellular segment spans residues 41–429 (AGLKLMGAPV…QGPPHSRTSW (389 aa)). An N-linked (GlcNAc...) asparagine glycan is attached at Asn63. Intrachain disulfides connect Cys64–Cys117 and Cys160–Cys203. N-linked (GlcNAc...) asparagine glycosylation is found at Asn191, Asn230, Asn240, Asn293, Asn366, and Asn380. Fibronectin type-III domains follow at residues 227–320 (APFN…TKGL) and 325–416 (APQN…SHDR). A helical membrane pass occupies residues 430-450 (VPVVLGVLTALVTAAALALIL). Over 451-890 (LRKRRKETRF…QQGLLPHSSC (440 aa)) the chain is Cytoplasmic. Ser466 carries the post-translational modification Phosphoserine. Residues 518–790 (FTLGRMLGKG…CLRMELENIL (273 aa)) form the Protein kinase domain. ATP contacts are provided by residues 524-532 (LGKGEFGSV) and Lys550. Residue Asp655 is the Proton acceptor of the active site. Residues Tyr681, Tyr685, Tyr686, and Tyr804 each carry the phosphotyrosine; by autocatalysis modification. Disordered stretches follow at residues 815–837 (AGGSLELPGRDQPYSGAGDGSGM) and 851–871 (LTPGGLAEQPGQAEHQPESPL). Phosphoserine is present on residues Ser818 and Ser869.

This sequence belongs to the protein kinase superfamily. Tyr protein kinase family. AXL/UFO subfamily. Monomer and homodimer. Interacts (via N-terminus) with extracellular ligands TULP1 and GAS6. Interacts with PIK3R1; this interaction increases PI3-kinase activity. Autophosphorylated. As to expression, abundant in the brain and lower levels in other tissues.

It is found in the cell membrane. The catalysed reaction is L-tyrosyl-[protein] + ATP = O-phospho-L-tyrosyl-[protein] + ADP + H(+). Receptor tyrosine kinase that transduces signals from the extracellular matrix into the cytoplasm by binding to several ligands including TULP1 or GAS6. Regulates many physiological processes including cell survival, migration and differentiation. Ligand binding at the cell surface induces dimerization and autophosphorylation of TYRO3 on its intracellular domain that provides docking sites for downstream signaling molecules. Following activation by ligand, interacts with PIK3R1 and thereby enhances PI3-kinase activity. Activates the AKT survival pathway, including nuclear translocation of NF-kappa-B and up-regulation of transcription of NF-kappa-B-regulated genes. TYRO3 signaling plays a role in various processes such as neuron protection from excitotoxic injury, platelet aggregation and cytoskeleton reorganization. Also plays an important role in inhibition of Toll-like receptors (TLRs)-mediated innate immune response by activating STAT1, which selectively induces production of suppressors of cytokine signaling SOCS1 and SOCS3. In terms of biological role, (Microbial infection) Acts as a receptor for lassa virus and lymphocytic choriomeningitis virus, possibly through GAS6 binding to phosphatidyl-serine at the surface of virion envelope. Its function is as follows. (Microbial infection) Acts as a receptor for Ebolavirus, possibly through GAS6 binding to phosphatidyl-serine at the surface of virion envelope. The polypeptide is Tyrosine-protein kinase receptor TYRO3 (TYRO3) (Homo sapiens (Human)).